The sequence spans 239 residues: 7-cyano-7-deazaguanine synthase (239 aa).

13 to 23 contacts ATP; it reads LSGGLDSMVTA. Cysteine 193, cysteine 203, cysteine 206, and cysteine 209 together coordinate Zn(2+).

Belongs to the QueC family. Zn(2+) is required as a cofactor.

The enzyme catalyses 7-carboxy-7-deazaguanine + NH4(+) + ATP = 7-cyano-7-deazaguanine + ADP + phosphate + H2O + H(+). The protein operates within purine metabolism; 7-cyano-7-deazaguanine biosynthesis. In terms of biological role, catalyzes the ATP-dependent conversion of 7-carboxy-7-deazaguanine (CDG) to 7-cyano-7-deazaguanine (preQ(0)). In Erythrobacter litoralis (strain HTCC2594), this protein is 7-cyano-7-deazaguanine synthase.